A 220-amino-acid chain; its full sequence is Probable GTP-binding protein EngB (220 aa).

One can recognise an EngB-type G domain in the interval 23-199; the sequence is SVREVAFAGR…ERVLASWLDI (177 aa). Residues Ser38 and Thr60 each contribute to the Mg(2+) site.

Belongs to the TRAFAC class TrmE-Era-EngA-EngB-Septin-like GTPase superfamily. EngB GTPase family. Mg(2+) serves as cofactor.

Functionally, necessary for normal cell division and for the maintenance of normal septation. In Dechloromonas aromatica (strain RCB), this protein is Probable GTP-binding protein EngB.